The following is a 231-amino-acid chain: Adenosine 5'-phosphosulfate reductase (231 aa).

The [4Fe-4S] cluster site is built by C118, C119, C201, and C204. Residue C227 is the Nucleophile; cysteine thiosulfonate intermediate of the active site.

It belongs to the PAPS reductase family. CysH subfamily. The cofactor is [4Fe-4S] cluster.

It localises to the cytoplasm. It carries out the reaction [thioredoxin]-disulfide + sulfite + AMP + 2 H(+) = adenosine 5'-phosphosulfate + [thioredoxin]-dithiol. Its pathway is sulfur metabolism; hydrogen sulfide biosynthesis; sulfite from sulfate. Its function is as follows. Catalyzes the formation of sulfite from adenosine 5'-phosphosulfate (APS) using thioredoxin as an electron donor. This Halalkalibacterium halodurans (strain ATCC BAA-125 / DSM 18197 / FERM 7344 / JCM 9153 / C-125) (Bacillus halodurans) protein is Adenosine 5'-phosphosulfate reductase.